Reading from the N-terminus, the 339-residue chain is UDP-N-acetylglucosamine--N-acetylmuramyl-(pentapeptide) pyrophosphoryl-undecaprenol N-acetylglucosamine transferase (339 aa).

Residues 11–13 (TGG), N127, R170, S188, I235, and Q280 each bind UDP-N-acetyl-alpha-D-glucosamine.

The protein belongs to the glycosyltransferase 28 family. MurG subfamily.

It localises to the cell inner membrane. It catalyses the reaction di-trans,octa-cis-undecaprenyl diphospho-N-acetyl-alpha-D-muramoyl-L-alanyl-D-glutamyl-meso-2,6-diaminopimeloyl-D-alanyl-D-alanine + UDP-N-acetyl-alpha-D-glucosamine = di-trans,octa-cis-undecaprenyl diphospho-[N-acetyl-alpha-D-glucosaminyl-(1-&gt;4)]-N-acetyl-alpha-D-muramoyl-L-alanyl-D-glutamyl-meso-2,6-diaminopimeloyl-D-alanyl-D-alanine + UDP + H(+). It participates in cell wall biogenesis; peptidoglycan biosynthesis. In terms of biological role, cell wall formation. Catalyzes the transfer of a GlcNAc subunit on undecaprenyl-pyrophosphoryl-MurNAc-pentapeptide (lipid intermediate I) to form undecaprenyl-pyrophosphoryl-MurNAc-(pentapeptide)GlcNAc (lipid intermediate II). This Thermotoga maritima (strain ATCC 43589 / DSM 3109 / JCM 10099 / NBRC 100826 / MSB8) protein is UDP-N-acetylglucosamine--N-acetylmuramyl-(pentapeptide) pyrophosphoryl-undecaprenol N-acetylglucosamine transferase.